The following is a 161-amino-acid chain: uncharacterized protein (161 aa).

A signal peptide (or 21) is located at residues M1–A23. The chain crosses the membrane as a helical span at residues I129–A149.

The protein localises to the membrane. This is an uncharacterized protein from Haemophilus influenzae (strain ATCC 51907 / DSM 11121 / KW20 / Rd).